We begin with the raw amino-acid sequence, 185 residues long: UPF0149 protein XF_2010 (185 aa).

The protein belongs to the UPF0149 family.

This is UPF0149 protein XF_2010 from Xylella fastidiosa (strain 9a5c).